We begin with the raw amino-acid sequence, 123 residues long: MSITKDQILEAFAAMSVMEVVELIEAMEEKFGVSAAAAVVAGGAADAGAAAEEQTEFNVILTAHGDNKVAVIKAIRGATGLGLKEAKAMSEAAPVAVKEGVSKEEAEALKKELVEAGATVEIK.

The protein belongs to the bacterial ribosomal protein bL12 family. As to quaternary structure, homodimer. Part of the ribosomal stalk of the 50S ribosomal subunit. Forms a multimeric L10(L12)X complex, where L10 forms an elongated spine to which 2 to 4 L12 dimers bind in a sequential fashion. Binds GTP-bound translation factors.

Its function is as follows. Forms part of the ribosomal stalk which helps the ribosome interact with GTP-bound translation factors. Is thus essential for accurate translation. The sequence is that of Large ribosomal subunit protein bL12 from Shewanella sp. (strain MR-4).